The chain runs to 1929 residues: Intraflagellar transport protein 140 (1929 aa).

WD repeat units lie at residues 76-116 (QVQV…PSYK) and 119-158 (LHQE…YSFE). The segment at 774–795 (LSTPDTGSPAVEAEESPQRQTR) is disordered. 3 LRR repeats span residues 957-980 (STSL…TFTK), 1019-1044 (ISLL…SLAE), and 1510-1532 (AQSL…LADI).

The protein localises to the cell projection. It localises to the cilium. It is found in the flagellum. The protein resides in the cytoplasm. Its subcellular location is the cytoskeleton. The protein localises to the flagellum axoneme. It localises to the flagellum basal body. Functionally, component of the intraflagellar transport complex A (IFT-A) involved in flagellar assembly. This is Intraflagellar transport protein 140 from Giardia intestinalis (strain ATCC 50803 / WB clone C6) (Giardia lamblia).